A 370-amino-acid chain; its full sequence is tRNA-specific 2-thiouridylase MnmA (370 aa).

Residues A24–S31 and L50 each bind ATP. Residue C118 is the Nucleophile of the active site. C118 and C214 are disulfide-bonded. G142 contributes to the ATP binding site. The interaction with tRNA stretch occupies residues K164 to Q166. The active-site Cysteine persulfide intermediate is the C214.

It belongs to the MnmA/TRMU family.

Its subcellular location is the cytoplasm. The catalysed reaction is S-sulfanyl-L-cysteinyl-[protein] + uridine(34) in tRNA + AH2 + ATP = 2-thiouridine(34) in tRNA + L-cysteinyl-[protein] + A + AMP + diphosphate + H(+). Functionally, catalyzes the 2-thiolation of uridine at the wobble position (U34) of tRNA, leading to the formation of s(2)U34. This is tRNA-specific 2-thiouridylase MnmA from Ehrlichia ruminantium (strain Gardel).